A 190-amino-acid polypeptide reads, in one-letter code: Peptidyl-tRNA hydrolase (190 aa).

TRNA is bound at residue Tyr18. Residue His23 is the Proton acceptor of the active site. TRNA-binding residues include Phe69, Asn71, and Asn117.

Belongs to the PTH family. As to quaternary structure, monomer.

It localises to the cytoplasm. It catalyses the reaction an N-acyl-L-alpha-aminoacyl-tRNA + H2O = an N-acyl-L-amino acid + a tRNA + H(+). Hydrolyzes ribosome-free peptidyl-tRNAs (with 1 or more amino acids incorporated), which drop off the ribosome during protein synthesis, or as a result of ribosome stalling. In terms of biological role, catalyzes the release of premature peptidyl moieties from peptidyl-tRNA molecules trapped in stalled 50S ribosomal subunits, and thus maintains levels of free tRNAs and 50S ribosomes. This is Peptidyl-tRNA hydrolase from Rhodococcus opacus (strain B4).